The sequence spans 211 residues: Protein-L-isoaspartate O-methyltransferase (211 aa).

Serine 62 is a catalytic residue.

It belongs to the methyltransferase superfamily. L-isoaspartyl/D-aspartyl protein methyltransferase family.

The protein resides in the cytoplasm. It catalyses the reaction [protein]-L-isoaspartate + S-adenosyl-L-methionine = [protein]-L-isoaspartate alpha-methyl ester + S-adenosyl-L-homocysteine. In terms of biological role, catalyzes the methyl esterification of L-isoaspartyl residues in peptides and proteins that result from spontaneous decomposition of normal L-aspartyl and L-asparaginyl residues. It plays a role in the repair and/or degradation of damaged proteins. The polypeptide is Protein-L-isoaspartate O-methyltransferase (Shewanella oneidensis (strain ATCC 700550 / JCM 31522 / CIP 106686 / LMG 19005 / NCIMB 14063 / MR-1)).